The chain runs to 124 residues: Urease subunit beta (124 aa).

This sequence belongs to the urease beta subunit family. Heterotrimer of UreA (gamma), UreB (beta) and UreC (alpha) subunits. Three heterotrimers associate to form the active enzyme.

It is found in the cytoplasm. The catalysed reaction is urea + 2 H2O + H(+) = hydrogencarbonate + 2 NH4(+). It functions in the pathway nitrogen metabolism; urea degradation; CO(2) and NH(3) from urea (urease route): step 1/1. In Ureaplasma urealyticum serovar 10 (strain ATCC 33699 / Western), this protein is Urease subunit beta.